Consider the following 467-residue polypeptide: Asparagine--tRNA ligase (467 aa).

The protein belongs to the class-II aminoacyl-tRNA synthetase family. Homodimer.

The protein localises to the cytoplasm. The enzyme catalyses tRNA(Asn) + L-asparagine + ATP = L-asparaginyl-tRNA(Asn) + AMP + diphosphate + H(+). This Protochlamydia amoebophila (strain UWE25) protein is Asparagine--tRNA ligase.